We begin with the raw amino-acid sequence, 245 residues long: Zinc finger CCCH domain-containing protein 54 (245 aa).

Residues Thr-92 to Phe-119 form a C3H1-type zinc finger. The tract at residues Gly-175 to Asp-204 is disordered.

In terms of assembly, interacts with MARD1/FLZ9 and RD21A. Specifically expressed in embryo (at protein level).

Its subcellular location is the nucleus. Embryo-specific transcription factor required at the globular to heart stage transition in embryo development. This is Zinc finger CCCH domain-containing protein 54 from Arabidopsis thaliana (Mouse-ear cress).